Reading from the N-terminus, the 352-residue chain is MAPLGYLLVLCSLKQALGSYPIWWSLAVGPQYSSLSTQPILCASIPGLVPKQLRFCRNYVEIMPSVAEGVKAGIQECQHQFRGRRWNCTTVSNSLAIFGPVLDKATRESAFVHAIASAGVAFAVTRSCAEGSAAICGCSSRLQGSPGEGWKWGGCSEDIEFGGMVSREFADARENRPDARSAMNRHNNEAGRQAIASHMHLKCKCHGLSGSCEVKTCWWSQPDFRTIGDFLKDKYDSASEMVVEKHRESRGWVETLRPRYTYFKVPTERDLVYYEASPNFCEPNPETGSFGTRDRTCNVSSHGIDGCDLLCCGRGHNARTERRREKCHCVFHWCCYVSCQECTRVYDVHTCK.

Residues 1–18 (MAPLGYLLVLCSLKQALG) form the signal peptide. Cystine bridges form between C77–C88, C128–C136, C138–C155, C203–C217, C205–C212, C281–C312, C297–C307, C311–C351, C327–C342, C329–C339, and C334–C335. A glycan (N-linked (GlcNAc...) asparagine) is linked at N87. S209 carries the O-palmitoleoyl serine; by PORCN lipid modification. Residue N298 is glycosylated (N-linked (GlcNAc...) asparagine).

This sequence belongs to the Wnt family. In terms of assembly, forms a soluble 1:1 complex with AFM; this prevents oligomerization and is required for prolonged biological activity. The complex with AFM may represent the physiological form in body fluids. Homooligomer; disulfide-linked, leading to inactivation. Interacts with APCDD1 and WLS. Component of the Wnt-Fzd-LRP5-LRP6 signaling complex that contains a WNT protein, a FZD protein and LRP5 or LRP6. Interacts directly in the complex with LRP6. Interacts with PORCN. Interacts with glypican GPC3. Interacts with PKD1 (via extracellular domain). Interacts with FZD5. In terms of processing, proteolytic processing by TIKI1 and TIKI2 promotes oxidation and formation of large disulfide-bond oligomers, leading to inactivation of WNT3A. Post-translationally, disulfide bonds have critical and distinct roles in secretion and activity. Loss of each conserved cysteine in WNT3A results in high molecular weight oxidized Wnt oligomers, which are formed through inter-Wnt disulfide bonding. Palmitoleoylation by PORCN is required for efficient binding to frizzled receptors. Palmitoleoylation is required for proper trafficking to cell surface, vacuolar acidification is critical to release palmitoleoylated WNT3A from WLS in secretory vesicles. Depalmitoleoylated by NOTUM, leading to inhibit Wnt signaling pathway, possibly by promoting disulfide bond formation and oligomerization. Dorsal portion of the neural tube (developing roof plate), and mesenchyme tissue surrounding the umbilical veins.

The protein localises to the secreted. Its subcellular location is the extracellular space. It localises to the extracellular matrix. Its function is as follows. Ligand for members of the frizzled family of seven transmembrane receptors. Functions in the canonical Wnt signaling pathway that results in activation of transcription factors of the TCF/LEF family. Required for normal embryonic mesoderm development and formation of caudal somites. Required for normal morphogenesis of the developing neural tube. Mediates self-renewal of the stem cells at the bottom on intestinal crypts (in vitro). The chain is Protein Wnt-3a (Wnt3a) from Mus musculus (Mouse).